Consider the following 224-residue polypeptide: Peroxiredoxin-like 2A (224 aa).

Positions 14-112 (MWSVGLGAVG…SKLGVPLYAV (99 aa)) are thioredoxin fold. Residue Sec85 is a non-standard amino acid, selenocysteine. Cys88 acts as the Redox-active in catalysis.

It belongs to the peroxiredoxin-like PRXL2 family. PRXL2A subfamily.

It localises to the cytoplasm. Involved in redox regulation of the cell. Acts as an antioxidant. Inhibits TNFSF11-induced NFKB1 and JUN activation and osteoclast differentiation. May affect bone resorption and help to maintain bone mass. The sequence is that of Peroxiredoxin-like 2A (PRXL2A) from Gallus gallus (Chicken).